A 643-amino-acid polypeptide reads, in one-letter code: Protein THEMIS2 (643 aa).

CABIT stretches follow at residues 1–238 (MEPV…TASS) and 239–514 (RHVH…KAKG). The segment at 546-631 (EIQAPPPRPP…RQDLDDDEHD (86 aa)) is disordered. Phosphothreonine is present on T593. The segment covering 609-619 (PAHRKGHRPAK) has biased composition (basic residues). Phosphotyrosine is present on Y632.

It belongs to the themis family. Interacts with VAV1. Interacts with LAT. Interacts constitutively with GRB2, LYN and PLCG2; these interactions increase the activation of PLCG2 and its downstream pathways following B cell receptor stimulation. Post-translationally, phosphorylation at Tyr-632 is induced by LPS. Phosphorylated by Src kinases (Lck or Fyn) following BCR engagement. Expressed in different endometrial adenocarcinoma cell lines and various other cell lines apart from the prostate cell line LNCaP and the ovarian cancer cell line BG1.

It localises to the nucleus. The protein resides in the cytoplasm. In terms of biological role, may constitute a control point in macrophage inflammatory response, promoting LPS-induced TLR4-mediated TNF production. Determines the threshold for activation of B cells by low-affinity and low-avidity ligands via PLCG2 activation and its downstream pathways. The protein is Protein THEMIS2 of Homo sapiens (Human).